The following is a 208-amino-acid chain: MARVAVLGGTFDPIHLGHLAAAQGVLHLTGVERVIFLPNRQPPHKQGQPVTPAEHRAAMVRLAIADNPAFGFSDLELRRPGPSYTIETVRALAAEHPDWEPAFIIGLDSLLAIRTWREWETLMQSVDFFAVTRPGHDLAAARRLLAELGPRLSGRVRLLEIPGVAVASADLRRLAAAGYPLRYLVPDPVARYIAEHRLYLRGESHGDG.

This sequence belongs to the NadD family.

It catalyses the reaction nicotinate beta-D-ribonucleotide + ATP + H(+) = deamido-NAD(+) + diphosphate. Its pathway is cofactor biosynthesis; NAD(+) biosynthesis; deamido-NAD(+) from nicotinate D-ribonucleotide: step 1/1. In terms of biological role, catalyzes the reversible adenylation of nicotinate mononucleotide (NaMN) to nicotinic acid adenine dinucleotide (NaAD). The sequence is that of Probable nicotinate-nucleotide adenylyltransferase from Symbiobacterium thermophilum (strain DSM 24528 / JCM 14929 / IAM 14863 / T).